A 149-amino-acid chain; its full sequence is Large ribosomal subunit protein bL17 (149 aa).

Belongs to the bacterial ribosomal protein bL17 family. In terms of assembly, part of the 50S ribosomal subunit. Contacts protein L32.

This is Large ribosomal subunit protein bL17 from Kosmotoga olearia (strain ATCC BAA-1733 / DSM 21960 / TBF 19.5.1).